The primary structure comprises 639 residues: Threonine--tRNA ligase (639 aa).

The 61-residue stretch at 1-61 (MATVRLPDGK…DGGGELEFVT (61 aa)) folds into the TGS domain. Positions 239-536 (DHRRLGRELG…LIEHYAGAFP (298 aa)) are catalytic. Positions 333, 384, and 513 each coordinate Zn(2+).

The protein belongs to the class-II aminoacyl-tRNA synthetase family. In terms of assembly, homodimer. It depends on Zn(2+) as a cofactor.

The protein resides in the cytoplasm. The catalysed reaction is tRNA(Thr) + L-threonine + ATP = L-threonyl-tRNA(Thr) + AMP + diphosphate + H(+). In terms of biological role, catalyzes the attachment of threonine to tRNA(Thr) in a two-step reaction: L-threonine is first activated by ATP to form Thr-AMP and then transferred to the acceptor end of tRNA(Thr). Also edits incorrectly charged L-seryl-tRNA(Thr). The polypeptide is Threonine--tRNA ligase (Rubrobacter xylanophilus (strain DSM 9941 / JCM 11954 / NBRC 16129 / PRD-1)).